Reading from the N-terminus, the 199-residue chain is Recombination protein RecR (199 aa).

The C4-type zinc-finger motif lies at 58–73; sequence CSVCGNLTDTDVCPLC. One can recognise a Toprim domain in the interval 81-176; that stretch reads SVICVVEDPR…KTTRIAHGIP (96 aa).

Belongs to the RecR family.

Functionally, may play a role in DNA repair. It seems to be involved in an RecBC-independent recombinational process of DNA repair. It may act with RecF and RecO. This is Recombination protein RecR from Acetivibrio thermocellus (strain ATCC 27405 / DSM 1237 / JCM 9322 / NBRC 103400 / NCIMB 10682 / NRRL B-4536 / VPI 7372) (Clostridium thermocellum).